The chain runs to 93 residues: Large ribosomal subunit protein uL23cz/uL23cy (93 aa).

The protein belongs to the universal ribosomal protein uL23 family. Part of the 50S ribosomal subunit.

It localises to the plastid. The protein localises to the chloroplast. Functionally, binds to 23S rRNA. The protein is Large ribosomal subunit protein uL23cz/uL23cy (rpl23-A) of Panax ginseng (Korean ginseng).